Reading from the N-terminus, the 211-residue chain is Succinate dehydrogenase subunit 4, mitochondrial (211 aa).

The N-terminal 36 residues, 1-36 (MASRLLARSKALALALSRADAAAPGPAAGVQWLRTL), are a transit peptide targeting the mitochondrion. Residues 41-64 (RDPAAAASPAPAPRQPAVGSPLGL) are disordered. A heme-binding site is contributed by H166. Y179 contacts a ubiquinone. A helical membrane pass occupies residues 188 to 210 (WVFIYFKILLIIMAKETVVYFDL).

As to quaternary structure, component of complex II composed of eight subunits in plants: four classical SDH subunits SDH1, SDH2, SDH3 and SDH4 (a flavoprotein (FP), an iron-sulfur protein (IP), and a cytochrome b composed of a large and a small subunit.), as well as four subunits unknown in mitochondria from bacteria and heterotrophic eukaryotes. The cofactor is heme.

It localises to the mitochondrion inner membrane. It functions in the pathway carbohydrate metabolism; tricarboxylic acid cycle. Membrane-anchoring subunit of succinate dehydrogenase (SDH). This chain is Succinate dehydrogenase subunit 4, mitochondrial, found in Oryza sativa subsp. japonica (Rice).